The sequence spans 807 residues: Spondin-1 (807 aa).

Residues 1-28 (MRLSPAPLRLSRGPALLALALPLAAALA) form the signal peptide. The region spanning 29–194 (FSDETLDKVA…DPTLDGVTDR (166 aa)) is the Reelin domain. Intrachain disulfides connect Cys44–Cys128, Cys156–Cys182, Cys199–Cys336, Cys200–Cys340, Cys202–Cys415, Cys443–Cys480, Cys454–Cys489, Cys459–Cys494, Cys502–Cys538, Cys513–Cys517, Cys548–Cys554, Cys559–Cys595, Cys570–Cys574, Cys605–Cys610, Cys615–Cys650, Cys626–Cys630, and Cys660–Cys665. The 194-residue stretch at 195 to 388 (PILDCCACGT…LTSLDHPQSP (194 aa)) folds into the Spondin domain. Residue Asn214 is glycosylated (N-linked (GlcNAc...) asparagine). Ca(2+)-binding residues include Asp325, Asp354, and Asp358. 5 consecutive TSP type-1 domains span residues 442 to 495 (TCIY…PGCS), 501 to 555 (TCTM…EECS), 558 to 611 (SCLV…PECH), 614 to 666 (PCLL…PECP), and 668 to 721 (DCEL…RKCL). Asn681 carries N-linked (GlcNAc...) asparagine glycosylation. Over residues 732-746 (REARESRRSEQLREE) the composition is skewed to basic and acidic residues. Residues 732-752 (REARESRRSEQLREESDGEQF) are disordered. In terms of domain architecture, TSP type-1 6 spans 754–806 (GCRMRPWTAWSECTKLCGGGIQERYMTVKKRFKSSQFTSCKDKKEIRACNVHP).

Binds to the central extracellular domain of APP and inhibits beta-secretase cleavage of APP. Expressed at high levels in the floor plate.

The protein resides in the secreted. It is found in the extracellular space. The protein localises to the extracellular matrix. In terms of biological role, cell adhesion protein that promotes the attachment of spinal cord and sensory neuron cells and the outgrowth of neurites in vitro. May contribute to the growth and guidance of axons in both the spinal cord and the PNS. This chain is Spondin-1 (Spon1), found in Rattus norvegicus (Rat).